Here is an 80-residue protein sequence, read N- to C-terminus: MSFEVLEKLEAKIQTAVDTIALLQMEVEELKEEKQQLQNEAQELREAREALEQRAQQVQQEHAAWQERIRSLLGKMEDVE.

Positions Phe-3–Glu-80 form a coiled coil.

Belongs to the ZapB family. In terms of assembly, homodimer. The ends of the coiled-coil dimer bind to each other, forming polymers. Interacts with FtsZ.

The protein localises to the cytoplasm. In terms of biological role, non-essential, abundant cell division factor that is required for proper Z-ring formation. It is recruited early to the divisome by direct interaction with FtsZ, stimulating Z-ring assembly and thereby promoting cell division earlier in the cell cycle. Its recruitment to the Z-ring requires functional FtsA or ZipA. This Vibrio cholerae serotype O1 (strain ATCC 39541 / Classical Ogawa 395 / O395) protein is Cell division protein ZapB.